A 429-amino-acid polypeptide reads, in one-letter code: Keratin, type I cytoskeletal 18 (429 aa).

The interval 2 to 78 (SYSRSVYSSS…NVNLIGGGQN (77 aa)) is head. Residues 79–114 (EKETMQDLNDRLASYLERVRSLEAANKKLEVQIRQH) are coil 1A. The IF rod domain occupies 79-389 (EKETMQDLND…RLLEGDGSFD (311 aa)). Positions 115–130 (TEKKGPSKDWSPYYKT) are linker 1. The interval 131–222 (IEDLRKQVFD…KNHQDDVTEL (92 aa)) is coil 1B. Positions 223-246 (QAQVARSAVTVEVDAPKSQDLGKI) are linker 12. Residues 247-385 (MTELRAQYDG…HTYRRLLEGD (139 aa)) are coil 2. Residues 386 to 429 (GSFDLQDAVPTVTTQTVKKVITTTQRIVDGKVVSESNDTEVLKS) are tail.

This sequence belongs to the intermediate filament family. As to quaternary structure, heterotetramer of two type I and two type II keratins. Keratin-18 associates with keratin-8. Post-translationally, phosphorylated. In terms of processing, proteolytically cleaved by caspases during epithelial cell apoptosis.

Its function is as follows. When phosphorylated, plays a role in filament reorganization. This Xenopus tropicalis (Western clawed frog) protein is Keratin, type I cytoskeletal 18.